A 292-amino-acid polypeptide reads, in one-letter code: ATP synthase gamma chain (292 aa).

Belongs to the ATPase gamma chain family. In terms of assembly, F-type ATPases have 2 components, CF(1) - the catalytic core - and CF(0) - the membrane proton channel. CF(1) has five subunits: alpha(3), beta(3), gamma(1), delta(1), epsilon(1). CF(0) has three main subunits: a, b and c.

The protein localises to the cell membrane. In terms of biological role, produces ATP from ADP in the presence of a proton gradient across the membrane. The gamma chain is believed to be important in regulating ATPase activity and the flow of protons through the CF(0) complex. This chain is ATP synthase gamma chain, found in Caldicellulosiruptor saccharolyticus (strain ATCC 43494 / DSM 8903 / Tp8T 6331).